A 481-amino-acid chain; its full sequence is 6-phosphogluconate dehydrogenase, decarboxylating (481 aa).

NADP(+) contacts are provided by residues 11–16 (GLAVMG), 34–36 (NRT), 76–78 (VKA), and Asn104. Residues Asn104 and 130 to 132 (SGG) each bind substrate. The active-site Proton acceptor is the Lys184. 187–188 (HN) serves as a coordination point for substrate. Catalysis depends on Glu191, which acts as the Proton donor. Residues Tyr192, Lys259, Arg286, Arg445, and His451 each coordinate substrate.

The protein belongs to the 6-phosphogluconate dehydrogenase family. In terms of assembly, homodimer.

It carries out the reaction 6-phospho-D-gluconate + NADP(+) = D-ribulose 5-phosphate + CO2 + NADPH. It participates in carbohydrate degradation; pentose phosphate pathway; D-ribulose 5-phosphate from D-glucose 6-phosphate (oxidative stage): step 3/3. Functionally, catalyzes the oxidative decarboxylation of 6-phosphogluconate to ribulose 5-phosphate and CO(2), with concomitant reduction of NADP to NADPH. This Drosophila melanogaster (Fruit fly) protein is 6-phosphogluconate dehydrogenase, decarboxylating (Pgd).